Consider the following 460-residue polypeptide: Bifunctional protein GlmU (460 aa).

The interval 1 to 229 (MTNYAIILAA…FNESLGVNDR (229 aa)) is pyrophosphorylase. UDP-N-acetyl-alpha-D-glucosamine-binding positions include 8 to 11 (LAAG), Lys-22, Gln-72, and 77 to 78 (GT). Asp-102 is a binding site for Mg(2+). 4 residues coordinate UDP-N-acetyl-alpha-D-glucosamine: Gly-139, Glu-154, Asn-169, and Asn-227. Asn-227 contributes to the Mg(2+) binding site. A linker region spans residues 230–250 (VALAIAETVMRQRITQKHMVN). An N-acetyltransferase region spans residues 251 to 460 (GVTFQNPETV…RLAHHPSRSK (210 aa)). UDP-N-acetyl-alpha-D-glucosamine contacts are provided by Arg-332 and Lys-350. Catalysis depends on His-362, which acts as the Proton acceptor. UDP-N-acetyl-alpha-D-glucosamine is bound by residues Tyr-365 and Asn-376. Acetyl-CoA contacts are provided by residues Ala-379, 385-386 (NY), Ser-404, Ala-422, and Arg-439.

In the N-terminal section; belongs to the N-acetylglucosamine-1-phosphate uridyltransferase family. It in the C-terminal section; belongs to the transferase hexapeptide repeat family. Homotrimer. It depends on Mg(2+) as a cofactor.

Its subcellular location is the cytoplasm. The catalysed reaction is alpha-D-glucosamine 1-phosphate + acetyl-CoA = N-acetyl-alpha-D-glucosamine 1-phosphate + CoA + H(+). It carries out the reaction N-acetyl-alpha-D-glucosamine 1-phosphate + UTP + H(+) = UDP-N-acetyl-alpha-D-glucosamine + diphosphate. It functions in the pathway nucleotide-sugar biosynthesis; UDP-N-acetyl-alpha-D-glucosamine biosynthesis; N-acetyl-alpha-D-glucosamine 1-phosphate from alpha-D-glucosamine 6-phosphate (route II): step 2/2. The protein operates within nucleotide-sugar biosynthesis; UDP-N-acetyl-alpha-D-glucosamine biosynthesis; UDP-N-acetyl-alpha-D-glucosamine from N-acetyl-alpha-D-glucosamine 1-phosphate: step 1/1. Its pathway is bacterial outer membrane biogenesis; LPS lipid A biosynthesis. Catalyzes the last two sequential reactions in the de novo biosynthetic pathway for UDP-N-acetylglucosamine (UDP-GlcNAc). The C-terminal domain catalyzes the transfer of acetyl group from acetyl coenzyme A to glucosamine-1-phosphate (GlcN-1-P) to produce N-acetylglucosamine-1-phosphate (GlcNAc-1-P), which is converted into UDP-GlcNAc by the transfer of uridine 5-monophosphate (from uridine 5-triphosphate), a reaction catalyzed by the N-terminal domain. This Streptococcus pyogenes serotype M1 protein is Bifunctional protein GlmU.